We begin with the raw amino-acid sequence, 362 residues long: Probable dual-specificity RNA methyltransferase RlmN (362 aa).

Glu105 acts as the Proton acceptor in catalysis. A Radical SAM core domain is found at 111-344; it reads HEYGNSICVT…VTIRREQGHD (234 aa). Cys118 and Cys349 are joined by a disulfide. Residues Cys125, Cys129, and Cys132 each contribute to the [4Fe-4S] cluster site. S-adenosyl-L-methionine is bound by residues 175 to 176, Ser207, 230 to 232, and Asn306; these read GE and SLH. Catalysis depends on Cys349, which acts as the S-methylcysteine intermediate.

Belongs to the radical SAM superfamily. RlmN family. The cofactor is [4Fe-4S] cluster.

It localises to the cytoplasm. It carries out the reaction adenosine(2503) in 23S rRNA + 2 reduced [2Fe-2S]-[ferredoxin] + 2 S-adenosyl-L-methionine = 2-methyladenosine(2503) in 23S rRNA + 5'-deoxyadenosine + L-methionine + 2 oxidized [2Fe-2S]-[ferredoxin] + S-adenosyl-L-homocysteine. The catalysed reaction is adenosine(37) in tRNA + 2 reduced [2Fe-2S]-[ferredoxin] + 2 S-adenosyl-L-methionine = 2-methyladenosine(37) in tRNA + 5'-deoxyadenosine + L-methionine + 2 oxidized [2Fe-2S]-[ferredoxin] + S-adenosyl-L-homocysteine. Its function is as follows. Specifically methylates position 2 of adenine 2503 in 23S rRNA and position 2 of adenine 37 in tRNAs. This chain is Probable dual-specificity RNA methyltransferase RlmN, found in Bacillus cereus (strain ATCC 14579 / DSM 31 / CCUG 7414 / JCM 2152 / NBRC 15305 / NCIMB 9373 / NCTC 2599 / NRRL B-3711).